The following is a 752-amino-acid chain: MAISSTERRAKNVQIFVEKDAVETSFAKWAQPGHFSRTLAKGPKTTTWIWNLHADAHDFDSQTSSLEEVSRKIFSAHFGQLAVIFLWISGMHFHGAYFSNYSAWLSDPISIKQSSQVVWPIVGQEILNADVGGNFQGVQTTSGWFQMWRAEGITSEVELYWIAIGGLIMSALMLFAGWFHYHKAAPKLEWFQNAESMMNHHLAGLLGLGCLSWSGHQIHIALPINKLLDAGVAPQEIPLPHEFLINRELMAQLYPSFNKGLAPFFSGQWGEYSDFLTFKGGLNPVTGGLWLSDIAHHHLALSVLFIFAGHMYRTNWGIGHSMKEILEAHKGPFTGEGHKGLYEILTTSWHAQLAINLAMMGSLSIIVAHHMYAMPPYPYIATDYATQLSLFTHHMWIGGFCVVGGAAHGAIFMVRDYTPANNYNNLLDRVLRHRDAIISHLNWVCIFLGCHSFGLYIHNDTMRALGRPQDMFSDKAIQLQPIFAQWVQNIHLLAPGTTAPNALATTSYAFGGDVVEVGGKIAMMPIKLGTADFMVHHIHAFTIHVTVLILLKGVLYARSSKLIPDKANLGFRFPCDGPGRGGTCQSSSWDHVFLGLFWMYNSISVVIFHFSWKMQSDVWGTITPDGNISHITGGNFAQSSITINGWLRDFLWSQASQVIQSYGSASSAYGLIFLGAHFIWAFSLMFLFSGRGYWQELIESIVWAHNKLNFAPAIQPRALSITQGRAVGLAHYLLGGIGTTWSFFLARAISIT.

The next 8 helical transmembrane spans lie at 73 to 96 (IFSA…FHGA), 159 to 182 (LYWI…FHYH), 198 to 222 (MNHH…HIAL), 294 to 312 (IAHH…GHMY), 349 to 372 (WHAQ…HHMY), 388 to 414 (LSLF…IFMV), 436 to 458 (AIIS…LYIH), and 533 to 551 (FMVH…LILL). Residues Cys575 and Cys584 each contribute to the [4Fe-4S] cluster site. 2 helical membrane-spanning segments follow: residues 591–612 (HVFL…HFSW) and 666–688 (SSAY…MFLF). His677 serves as a coordination point for chlorophyll a'. Residues Met685 and Tyr693 each coordinate chlorophyll a. A phylloquinone-binding site is contributed by Trp694. Residues 726–746 (AVGLAHYLLGGIGTTWSFFLA) traverse the membrane as a helical segment.

This sequence belongs to the PsaA/PsaB family. The PsaA/B heterodimer binds the P700 chlorophyll special pair and subsequent electron acceptors. PSI consists of a core antenna complex that captures photons, and an electron transfer chain that converts photonic excitation into a charge separation. The eukaryotic PSI reaction center is composed of at least 11 subunits. Requires P700 is a chlorophyll a/chlorophyll a' dimer, A0 is one or more chlorophyll a, A1 is one or both phylloquinones and FX is a shared 4Fe-4S iron-sulfur center. as cofactor.

The protein localises to the plastid. It is found in the chloroplast thylakoid membrane. It carries out the reaction reduced [plastocyanin] + hnu + oxidized [2Fe-2S]-[ferredoxin] = oxidized [plastocyanin] + reduced [2Fe-2S]-[ferredoxin]. In terms of biological role, psaA and PsaB bind P700, the primary electron donor of photosystem I (PSI), as well as the electron acceptors A0, A1 and FX. PSI is a plastocyanin/cytochrome c6-ferredoxin oxidoreductase, converting photonic excitation into a charge separation, which transfers an electron from the donor P700 chlorophyll pair to the spectroscopically characterized acceptors A0, A1, FX, FA and FB in turn. Oxidized P700 is reduced on the lumenal side of the thylakoid membrane by plastocyanin or cytochrome c6. The polypeptide is Photosystem I P700 chlorophyll a apoprotein A1 (Trieres chinensis (Marine centric diatom)).